The primary structure comprises 462 residues: Argininosuccinate lyase (462 aa).

This sequence belongs to the lyase 1 family. Argininosuccinate lyase subfamily.

It localises to the cytoplasm. The catalysed reaction is 2-(N(omega)-L-arginino)succinate = fumarate + L-arginine. The protein operates within amino-acid biosynthesis; L-arginine biosynthesis; L-arginine from L-ornithine and carbamoyl phosphate: step 3/3. The protein is Argininosuccinate lyase of Bacillus anthracis (strain A0248).